The following is a 378-amino-acid chain: Chaperone protein DnaJ (378 aa).

The 66-residue stretch at 5–70 folds into the J domain; sequence DYYETLGVSQ…QKRAAYDQYG (66 aa). The CR-type zinc-finger motif lies at 134 to 212; sequence GKSLEIKVPT…CRGQGRVEKT (79 aa). Residues Cys147, Cys150, Cys164, Cys167, Cys186, Cys189, Cys200, and Cys203 each contribute to the Zn(2+) site. CXXCXGXG motif repeat units follow at residues 147 to 154, 164 to 171, 186 to 193, and 200 to 207; these read CEPCDGSG, CSTCHGHG, CPTCSGKG, and CTSCRGQG.

This sequence belongs to the DnaJ family. As to quaternary structure, homodimer. Zn(2+) is required as a cofactor.

It localises to the cytoplasm. In terms of biological role, participates actively in the response to hyperosmotic and heat shock by preventing the aggregation of stress-denatured proteins and by disaggregating proteins, also in an autonomous, DnaK-independent fashion. Unfolded proteins bind initially to DnaJ; upon interaction with the DnaJ-bound protein, DnaK hydrolyzes its bound ATP, resulting in the formation of a stable complex. GrpE releases ADP from DnaK; ATP binding to DnaK triggers the release of the substrate protein, thus completing the reaction cycle. Several rounds of ATP-dependent interactions between DnaJ, DnaK and GrpE are required for fully efficient folding. Also involved, together with DnaK and GrpE, in the DNA replication of plasmids through activation of initiation proteins. This Colwellia psychrerythraea (strain 34H / ATCC BAA-681) (Vibrio psychroerythus) protein is Chaperone protein DnaJ.